The following is a 51-amino-acid chain: MKLTCVVIIAVLILTACQFTTADDCKPKNNLCLWSSECCSGICFPFAQRCT.

The signal sequence occupies residues 1-22 (MKLTCVVIIAVLILTACQFTTA). 3 cysteine pairs are disulfide-bonded: cysteine 25–cysteine 39, cysteine 32–cysteine 43, and cysteine 38–cysteine 50.

Belongs to the conotoxin O1 superfamily. Expressed by the venom duct.

It is found in the secreted. Its function is as follows. Probable neurotoxin. The sequence is that of Conotoxin Cal6.33 from Californiconus californicus (California cone).